The following is a 274-amino-acid chain: Protein RecA (274 aa).

Gly-43–Thr-50 provides a ligand contact to ATP.

Belongs to the RecA family.

The protein resides in the cytoplasm. In terms of biological role, can catalyze the hydrolysis of ATP in the presence of single-stranded DNA, the ATP-dependent uptake of single-stranded DNA by duplex DNA, and the ATP-dependent hybridization of homologous single-stranded DNAs. It interacts with LexA causing its activation and leading to its autocatalytic cleavage. This is Protein RecA from Neisseria flavescens.